Consider the following 479-residue polypeptide: tRNA modification GTPase MnmE (479 aa).

(6S)-5-formyl-5,6,7,8-tetrahydrofolate is bound by residues R25, E82, and K134. In terms of domain architecture, TrmE-type G spans 230-401; that stretch reads GLRVVIAGQP…LRAALLARAG (172 aa). Residue N240 coordinates K(+). GTP contacts are provided by residues 240–245, 259–265, 284–287, 352–355, and 382–384; these read NAGKSS, TPIPGTT, DTAG, NKAD, and SAR. Residue S244 coordinates Mg(2+). K(+)-binding residues include T259, I261, and T264. A Mg(2+)-binding site is contributed by T265. Residue K479 participates in (6S)-5-formyl-5,6,7,8-tetrahydrofolate binding.

This sequence belongs to the TRAFAC class TrmE-Era-EngA-EngB-Septin-like GTPase superfamily. TrmE GTPase family. As to quaternary structure, homodimer. Heterotetramer of two MnmE and two MnmG subunits. K(+) serves as cofactor.

The protein resides in the cytoplasm. Exhibits a very high intrinsic GTPase hydrolysis rate. Involved in the addition of a carboxymethylaminomethyl (cmnm) group at the wobble position (U34) of certain tRNAs, forming tRNA-cmnm(5)s(2)U34. The sequence is that of tRNA modification GTPase MnmE from Leptothrix cholodnii (strain ATCC 51168 / LMG 8142 / SP-6) (Leptothrix discophora (strain SP-6)).